The primary structure comprises 397 residues: Tryptophan synthase beta chain (397 aa).

N6-(pyridoxal phosphate)lysine is present on lysine 87.

It belongs to the TrpB family. Tetramer of two alpha and two beta chains. Pyridoxal 5'-phosphate is required as a cofactor.

The catalysed reaction is (1S,2R)-1-C-(indol-3-yl)glycerol 3-phosphate + L-serine = D-glyceraldehyde 3-phosphate + L-tryptophan + H2O. Its pathway is amino-acid biosynthesis; L-tryptophan biosynthesis; L-tryptophan from chorismate: step 5/5. Its function is as follows. The beta subunit is responsible for the synthesis of L-tryptophan from indole and L-serine. In Salmonella agona (strain SL483), this protein is Tryptophan synthase beta chain.